Reading from the N-terminus, the 304-residue chain is Non-specific ribonucleoside hydrolase RihC (304 aa).

Histidine 233 is a catalytic residue.

This sequence belongs to the IUNH family. RihC subfamily.

Hydrolyzes both purine and pyrimidine ribonucleosides with a broad-substrate specificity. The protein is Non-specific ribonucleoside hydrolase RihC of Escherichia coli O127:H6 (strain E2348/69 / EPEC).